A 343-amino-acid chain; its full sequence is L-threonine 3-dehydrogenase (343 aa).

Cysteine 38 is a binding site for Zn(2+). Catalysis depends on charge relay system residues threonine 40 and histidine 43. Zn(2+) contacts are provided by histidine 63, glutamate 64, cysteine 93, cysteine 96, cysteine 99, and cysteine 107. Residues isoleucine 175, aspartate 195, arginine 200, 262–264 (LGI), and 286–287 (IY) contribute to the NAD(+) site.

It belongs to the zinc-containing alcohol dehydrogenase family. In terms of assembly, homotetramer. Zn(2+) serves as cofactor.

It is found in the cytoplasm. It carries out the reaction L-threonine + NAD(+) = (2S)-2-amino-3-oxobutanoate + NADH + H(+). It participates in amino-acid degradation; L-threonine degradation via oxydo-reductase pathway; glycine from L-threonine: step 1/2. Its function is as follows. Catalyzes the NAD(+)-dependent oxidation of L-threonine to 2-amino-3-ketobutyrate. This is L-threonine 3-dehydrogenase from Paraburkholderia phytofirmans (strain DSM 17436 / LMG 22146 / PsJN) (Burkholderia phytofirmans).